The sequence spans 218 residues: Adenylate kinase (218 aa).

10-15 (GAGKGT) contributes to the ATP binding site. Residues 30 to 59 (STGDMLRAAVKAGTPLGIEAKKVMDAGGLV) form an NMP region. AMP is bound by residues Thr-31, Arg-36, 57-59 (GLV), 85-88 (GFPR), and Gln-92. The segment at 122-159 (GRRSHAASGRTYHVKFNPPKVAGVDDVTGEPLIQRDDD) is LID. ATP contacts are provided by residues Arg-123 and 132–133 (TY). Residues Arg-156 and Arg-167 each contribute to the AMP site. Gly-203 is an ATP binding site.

Belongs to the adenylate kinase family. Monomer.

The protein resides in the cytoplasm. It catalyses the reaction AMP + ATP = 2 ADP. The protein operates within purine metabolism; AMP biosynthesis via salvage pathway; AMP from ADP: step 1/1. Its function is as follows. Catalyzes the reversible transfer of the terminal phosphate group between ATP and AMP. Plays an important role in cellular energy homeostasis and in adenine nucleotide metabolism. This is Adenylate kinase from Albidiferax ferrireducens (strain ATCC BAA-621 / DSM 15236 / T118) (Rhodoferax ferrireducens).